The following is a 643-amino-acid chain: Carboxy-terminal kinesin 2 (643 aa).

2 disordered regions span residues 1–42 and 81–101; these read MDST…SSLE and MRPKNSGPGITSTSFSGKTKV. The segment at 1-116 is globular; it reads MDSTDKKVQV…QPAAIGAEKK (116 aa). Over residues 88-101 the composition is skewed to polar residues; the sequence is PGITSTSFSGKTKV. The stretch at 117 to 296 forms a coiled coil; it reads KRAAWDLKGQ…LVQELKGNIR (180 aa). Residues 294-633 form the Kinesin motor domain; it reads NIRVFCRVRP…LRFASKVNEC (340 aa). 386–393 is a binding site for ATP; it reads GQTGSGKT.

Belongs to the TRAFAC class myosin-kinesin ATPase superfamily. Kinesin family. NCD subfamily.

It is found in the cytoplasm. It localises to the cytoskeleton. Its function is as follows. Promotes mitotic spindle assembly. The sequence is that of Carboxy-terminal kinesin 2 from Xenopus laevis (African clawed frog).